We begin with the raw amino-acid sequence, 85 residues long: Turripeptide PaIAa (85 aa).

This sequence belongs to the turripeptide family. In terms of tissue distribution, expressed by the venom duct.

It is found in the secreted. In terms of biological role, is lethal to drosophila larvae. The polypeptide is Turripeptide PaIAa (Polystira albida (White giant-turris)).